A 105-amino-acid chain; its full sequence is Pyrimidine/purine nucleoside phosphorylase (105 aa).

The protein belongs to the nucleoside phosphorylase PpnP family.

It carries out the reaction a purine D-ribonucleoside + phosphate = a purine nucleobase + alpha-D-ribose 1-phosphate. It catalyses the reaction adenosine + phosphate = alpha-D-ribose 1-phosphate + adenine. The enzyme catalyses cytidine + phosphate = cytosine + alpha-D-ribose 1-phosphate. The catalysed reaction is guanosine + phosphate = alpha-D-ribose 1-phosphate + guanine. It carries out the reaction inosine + phosphate = alpha-D-ribose 1-phosphate + hypoxanthine. It catalyses the reaction thymidine + phosphate = 2-deoxy-alpha-D-ribose 1-phosphate + thymine. The enzyme catalyses uridine + phosphate = alpha-D-ribose 1-phosphate + uracil. The catalysed reaction is xanthosine + phosphate = alpha-D-ribose 1-phosphate + xanthine. Its function is as follows. Catalyzes the phosphorolysis of diverse nucleosides, yielding D-ribose 1-phosphate and the respective free bases. Can use uridine, adenosine, guanosine, cytidine, thymidine, inosine and xanthosine as substrates. Also catalyzes the reverse reactions. The sequence is that of Pyrimidine/purine nucleoside phosphorylase from Acidovorax ebreus (strain TPSY) (Diaphorobacter sp. (strain TPSY)).